Reading from the N-terminus, the 380-residue chain is Serpin B7 (380 aa).

Phosphoserine is present on residues Ser217 and Ser223.

It belongs to the serpin family. Ov-serpin subfamily. As to expression, predominantly expressed in mesangial cells. Expressed in the epidermis of the whole body.

It localises to the cytoplasm. Its function is as follows. Might function as an inhibitor of Lys-specific proteases. Might influence the maturation of megakaryocytes via its action as a serpin. The protein is Serpin B7 (SERPINB7) of Homo sapiens (Human).